Consider the following 197-residue polypeptide: Putative RNA polymerase II subunit B1 CTD phosphatase rtr1 (197 aa).

Residues 60–139 (EARKYLRKSD…LSDEPLWIRE (80 aa)) form an RTR1-type zinc finger. The Zn(2+) site is built by Cys-83, Cys-88, Cys-115, and Cys-119.

Belongs to the RPAP2 family.

It localises to the cytoplasm. The protein resides in the nucleus. The enzyme catalyses O-phospho-L-seryl-[protein] + H2O = L-seryl-[protein] + phosphate. It catalyses the reaction O-phospho-L-threonyl-[protein] + H2O = L-threonyl-[protein] + phosphate. Functionally, putative RNA polymerase II subunit B1 C-terminal domain (CTD) phosphatase involved in RNA polymerase II transcription regulation. The protein is Putative RNA polymerase II subunit B1 CTD phosphatase rtr1 of Schizosaccharomyces pombe (strain 972 / ATCC 24843) (Fission yeast).